A 65-amino-acid polypeptide reads, in one-letter code: Small ribosomal subunit protein bS21 (65 aa).

Residues 39–65 (EKPSIKRKKKAIAARKRALKKQRKMMD) form a disordered region. Residues 43–65 (IKRKKKAIAARKRALKKQRKMMD) are compositionally biased toward basic residues.

This sequence belongs to the bacterial ribosomal protein bS21 family.

This Pelobacter propionicus (strain DSM 2379 / NBRC 103807 / OttBd1) protein is Small ribosomal subunit protein bS21.